The chain runs to 105 residues: Pyrimidine/purine nucleoside phosphorylase (105 aa).

The protein belongs to the nucleoside phosphorylase PpnP family.

It catalyses the reaction a purine D-ribonucleoside + phosphate = a purine nucleobase + alpha-D-ribose 1-phosphate. The enzyme catalyses adenosine + phosphate = alpha-D-ribose 1-phosphate + adenine. It carries out the reaction cytidine + phosphate = cytosine + alpha-D-ribose 1-phosphate. The catalysed reaction is guanosine + phosphate = alpha-D-ribose 1-phosphate + guanine. It catalyses the reaction inosine + phosphate = alpha-D-ribose 1-phosphate + hypoxanthine. The enzyme catalyses thymidine + phosphate = 2-deoxy-alpha-D-ribose 1-phosphate + thymine. It carries out the reaction uridine + phosphate = alpha-D-ribose 1-phosphate + uracil. The catalysed reaction is xanthosine + phosphate = alpha-D-ribose 1-phosphate + xanthine. In terms of biological role, catalyzes the phosphorolysis of diverse nucleosides, yielding D-ribose 1-phosphate and the respective free bases. Can use uridine, adenosine, guanosine, cytidine, thymidine, inosine and xanthosine as substrates. Also catalyzes the reverse reactions. The protein is Pyrimidine/purine nucleoside phosphorylase of Delftia acidovorans (strain DSM 14801 / SPH-1).